Here is a 59-residue protein sequence, read N- to C-terminus: Dybowskin-1CDYa (59 aa).

A signal peptide spans 1-22 (MFTLKKSLLLLFFLGTINFSLC). Positions 23–44 (EEERNAEEERRDYPEERDVEVE) are excised as a propeptide.

This sequence belongs to the frog skin active peptide (FSAP) family. Brevinin subfamily. As to expression, expressed by the skin glands.

Its subcellular location is the secreted. Functionally, antimicrobial peptide. Has activity against the Gram-positive bacterium S.aureus (MIC=6 uM) and the Gram-negative bacterium E.coli (MIC=3 uM). Lacks hemolytic activity against human erythrocytes. The chain is Dybowskin-1CDYa from Rana dybowskii (Dybovsky's frog).